Here is a 209-residue protein sequence, read N- to C-terminus: Imidazole glycerol phosphate synthase subunit HisH (209 aa).

Residues M1–S205 enclose the Glutamine amidotransferase type-1 domain. The active-site Nucleophile is the C79. Active-site residues include H180 and E182.

In terms of assembly, heterodimer of HisH and HisF.

Its subcellular location is the cytoplasm. The catalysed reaction is 5-[(5-phospho-1-deoxy-D-ribulos-1-ylimino)methylamino]-1-(5-phospho-beta-D-ribosyl)imidazole-4-carboxamide + L-glutamine = D-erythro-1-(imidazol-4-yl)glycerol 3-phosphate + 5-amino-1-(5-phospho-beta-D-ribosyl)imidazole-4-carboxamide + L-glutamate + H(+). The enzyme catalyses L-glutamine + H2O = L-glutamate + NH4(+). Its pathway is amino-acid biosynthesis; L-histidine biosynthesis; L-histidine from 5-phospho-alpha-D-ribose 1-diphosphate: step 5/9. IGPS catalyzes the conversion of PRFAR and glutamine to IGP, AICAR and glutamate. The HisH subunit catalyzes the hydrolysis of glutamine to glutamate and ammonia as part of the synthesis of IGP and AICAR. The resulting ammonia molecule is channeled to the active site of HisF. The protein is Imidazole glycerol phosphate synthase subunit HisH of Bacillus cereus (strain ATCC 10987 / NRS 248).